Reading from the N-terminus, the 310-residue chain is Ribose-phosphate pyrophosphokinase (310 aa).

ATP-binding positions include 34–36 (DME) and 93–94 (RQ). Residues histidine 127 and aspartate 167 each coordinate Mg(2+). Residue lysine 190 is part of the active site. D-ribose 5-phosphate-binding positions include arginine 192, aspartate 216, and 220–224 (DSGGT).

It belongs to the ribose-phosphate pyrophosphokinase family. Class I subfamily. As to quaternary structure, homohexamer. Requires Mg(2+) as cofactor.

The protein resides in the cytoplasm. The enzyme catalyses D-ribose 5-phosphate + ATP = 5-phospho-alpha-D-ribose 1-diphosphate + AMP + H(+). It functions in the pathway metabolic intermediate biosynthesis; 5-phospho-alpha-D-ribose 1-diphosphate biosynthesis; 5-phospho-alpha-D-ribose 1-diphosphate from D-ribose 5-phosphate (route I): step 1/1. Functionally, involved in the biosynthesis of the central metabolite phospho-alpha-D-ribosyl-1-pyrophosphate (PRPP) via the transfer of pyrophosphoryl group from ATP to 1-hydroxyl of ribose-5-phosphate (Rib-5-P). The polypeptide is Ribose-phosphate pyrophosphokinase (Granulibacter bethesdensis (strain ATCC BAA-1260 / CGDNIH1)).